Reading from the N-terminus, the 248-residue chain is Ribosomal RNA small subunit methyltransferase J (248 aa).

S-adenosyl-L-methionine is bound by residues 101–102 (RD), 117–118 (ER), 153–154 (SS), and Asp-171.

The protein belongs to the methyltransferase superfamily. RsmJ family.

It localises to the cytoplasm. It catalyses the reaction guanosine(1516) in 16S rRNA + S-adenosyl-L-methionine = N(2)-methylguanosine(1516) in 16S rRNA + S-adenosyl-L-homocysteine + H(+). Its function is as follows. Specifically methylates the guanosine in position 1516 of 16S rRNA. The polypeptide is Ribosomal RNA small subunit methyltransferase J (Serratia proteamaculans (strain 568)).